Consider the following 202-residue polypeptide: Probable nicotinate-nucleotide adenylyltransferase (202 aa).

The protein belongs to the NadD family.

It carries out the reaction nicotinate beta-D-ribonucleotide + ATP + H(+) = deamido-NAD(+) + diphosphate. It participates in cofactor biosynthesis; NAD(+) biosynthesis; deamido-NAD(+) from nicotinate D-ribonucleotide: step 1/1. Catalyzes the reversible adenylation of nicotinate mononucleotide (NaMN) to nicotinic acid adenine dinucleotide (NaAD). The chain is Probable nicotinate-nucleotide adenylyltransferase from Clostridium perfringens (strain 13 / Type A).